The primary structure comprises 156 residues: ATP synthase subunit b (156 aa).

The helical transmembrane segment at 7-27 (LIVQMLVFVVFIGLTMKFIWP) threads the bilayer.

This sequence belongs to the ATPase B chain family. F-type ATPases have 2 components, F(1) - the catalytic core - and F(0) - the membrane proton channel. F(1) has five subunits: alpha(3), beta(3), gamma(1), delta(1), epsilon(1). F(0) has three main subunits: a(1), b(2) and c(10-14). The alpha and beta chains form an alternating ring which encloses part of the gamma chain. F(1) is attached to F(0) by a central stalk formed by the gamma and epsilon chains, while a peripheral stalk is formed by the delta and b chains.

The protein resides in the cell inner membrane. Its function is as follows. F(1)F(0) ATP synthase produces ATP from ADP in the presence of a proton or sodium gradient. F-type ATPases consist of two structural domains, F(1) containing the extramembraneous catalytic core and F(0) containing the membrane proton channel, linked together by a central stalk and a peripheral stalk. During catalysis, ATP synthesis in the catalytic domain of F(1) is coupled via a rotary mechanism of the central stalk subunits to proton translocation. In terms of biological role, component of the F(0) channel, it forms part of the peripheral stalk, linking F(1) to F(0). In Coxiella burnetii (strain CbuK_Q154) (Coxiella burnetii (strain Q154)), this protein is ATP synthase subunit b.